We begin with the raw amino-acid sequence, 191 residues long: uncharacterized protein (191 aa).

This is an uncharacterized protein from Bacillus subtilis (strain 168).